Reading from the N-terminus, the 388-residue chain is Succinate--CoA ligase [ADP-forming] subunit beta (388 aa).

The ATP-grasp domain occupies 9-245 (KELLASYGLP…KSQENERELK (237 aa)). ATP-binding positions include Lys-46, 53–55 (GRG), Glu-100, Tyr-103, and Glu-108. Mg(2+) contacts are provided by Asn-200 and Asp-214. Substrate-binding positions include Asn-265 and 322 to 324 (GIV).

It belongs to the succinate/malate CoA ligase beta subunit family. Heterotetramer of two alpha and two beta subunits. Mg(2+) is required as a cofactor.

It catalyses the reaction succinate + ATP + CoA = succinyl-CoA + ADP + phosphate. The enzyme catalyses GTP + succinate + CoA = succinyl-CoA + GDP + phosphate. It functions in the pathway carbohydrate metabolism; tricarboxylic acid cycle; succinate from succinyl-CoA (ligase route): step 1/1. Functionally, succinyl-CoA synthetase functions in the citric acid cycle (TCA), coupling the hydrolysis of succinyl-CoA to the synthesis of either ATP or GTP and thus represents the only step of substrate-level phosphorylation in the TCA. The beta subunit provides nucleotide specificity of the enzyme and binds the substrate succinate, while the binding sites for coenzyme A and phosphate are found in the alpha subunit. The protein is Succinate--CoA ligase [ADP-forming] subunit beta of Neisseria gonorrhoeae (strain NCCP11945).